A 777-amino-acid chain; its full sequence is Degenerin unc-8 (777 aa).

Residues 1-128 (MSPLLTWNLI…VATSSFFGRY (128 aa)) are Cytoplasmic-facing. Residues 129-149 (VWAALFMCMLMAFLLQTYWTM) form a helical membrane-spanning segment. At 150–689 (SEYLQYRTII…KETAGYTLVN (540 aa)) the chain is on the extracellular side. 7 N-linked (GlcNAc...) asparagine glycosylation sites follow: N274, N319, N357, N411, N453, N533, and N597. Residues 690–710 (LFSDFGGNIGLWIGFSVITFA) form a helical membrane-spanning segment. At 711-777 (EFAELFCEIC…NESTKELMSK (67 aa)) the chain is on the cytoplasmic side. Residues 752 to 777 (QRSPKKSQPGEDEVSTNESTKELMSK) are disordered.

It belongs to the amiloride-sensitive sodium channel (TC 1.A.6) family.

It localises to the membrane. Its function is as follows. Sodium permeable non-voltage-sensitive ion channel. Involved in the activity-dependent removal of selected presynaptic proteins, such as synaptobrevin snb-1, and Ras-related rab-3, in the remodeling of GABAergic motor neurons. In Caenorhabditis elegans, this protein is Degenerin unc-8.